We begin with the raw amino-acid sequence, 66 residues long: Large ribosomal subunit protein bL35 (66 aa).

Belongs to the bacterial ribosomal protein bL35 family.

This Synechococcus sp. (strain JA-2-3B'a(2-13)) (Cyanobacteria bacterium Yellowstone B-Prime) protein is Large ribosomal subunit protein bL35.